A 461-amino-acid polypeptide reads, in one-letter code: Gram-negative bacteria-binding protein 2 (461 aa).

An N-terminal signal peptide occupies residues 1–20 (MRWEFLPCLLLLISNNKIFG). Residues 21–115 (FKVPSINFEM…TRVIINTRLL (95 aa)) enclose the CBM39 domain. Residues asparagine 71, asparagine 170, asparagine 177, and asparagine 364 are each glycosylated (N-linked (GlcNAc...) asparagine). Positions 179–461 (TTWKHDIRQR…VIDYVRVYAE (283 aa)) constitute a GH16 domain.

Belongs to the insect beta-1,3-glucan binding protein family.

It localises to the secreted. Functionally, involved in the recognition of invading microorganisms. Binds specifically to beta-1,3-glucan and activates the phenoloxidase cascade. This is Gram-negative bacteria-binding protein 2 from Drosophila melanogaster (Fruit fly).